Reading from the N-terminus, the 206-residue chain is Guanylate kinase (206 aa).

The region spanning 5–183 (FNLLILSGPS…SKEIILSIAK (179 aa)) is the Guanylate kinase-like domain. 12–19 (GPSGAGKS) is a binding site for ATP.

Belongs to the guanylate kinase family.

The protein localises to the cytoplasm. It catalyses the reaction GMP + ATP = GDP + ADP. Its function is as follows. Essential for recycling GMP and indirectly, cGMP. The polypeptide is Guanylate kinase (Helicobacter pylori (strain HPAG1)).